The chain runs to 64 residues: MNTFVVVFLLLTAILCHAEHALDETARGCNRLNKKCNSDGDCCRYGERCISTGVNYYCRPDFGP.

The signal sequence occupies residues 1–18; that stretch reads MNTFVVVFLLLTAILCHA. The propeptide occupies 19–27; sequence EHALDETAR. Disulfide bonds link Cys29-Cys43, Cys36-Cys49, and Cys42-Cys58.

This sequence belongs to the scorpion calcin-like family. In terms of tissue distribution, expressed by the venom gland.

The protein resides in the secreted. Functionally, may increase intracellular calcium release through the activation of nuclear inositol 1,4,5-trisphosphate receptors (ITPR) of cardiomyocytes, thereby causing an increase in the contraction frequency of these cells. This chain is Toxin BmCa-1, found in Olivierus martensii (Manchurian scorpion).